The primary structure comprises 126 residues: Large ribosomal subunit protein uL22 (126 aa).

It belongs to the universal ribosomal protein uL22 family. In terms of assembly, part of the 50S ribosomal subunit.

Its function is as follows. This protein binds specifically to 23S rRNA; its binding is stimulated by other ribosomal proteins, e.g. L4, L17, and L20. It is important during the early stages of 50S assembly. It makes multiple contacts with different domains of the 23S rRNA in the assembled 50S subunit and ribosome. In terms of biological role, the globular domain of the protein is located near the polypeptide exit tunnel on the outside of the subunit, while an extended beta-hairpin is found that lines the wall of the exit tunnel in the center of the 70S ribosome. This Zymomonas mobilis subsp. mobilis (strain ATCC 31821 / ZM4 / CP4) protein is Large ribosomal subunit protein uL22.